We begin with the raw amino-acid sequence, 719 residues long: Photosystem I P700 chlorophyll a apoprotein A1 (719 aa).

Helical transmembrane passes span 59–82 (IFGA…FHGA), 145–168 (LYCT…FHYH), 184–208 (LNHH…HVSL), 280–298 (TAHH…GHMY), 335–358 (WHAQ…HHMY), 374–400 (LSLF…IFMV), 422–444 (AIIS…LYIH), and 520–538 (FLVH…LILL). Positions 562 and 571 each coordinate [4Fe-4S] cluster. A run of 2 helical transmembrane segments spans residues 578–599 (HVFL…HFSW) and 653–675 (LSAY…MFLF). Histidine 664 provides a ligand contact to chlorophyll a'. The chlorophyll a site is built by methionine 672 and tyrosine 680. Tryptophan 681 is a phylloquinone binding site. A helical membrane pass occupies residues 713 to 719 (AVGVTHT).

Belongs to the PsaA/PsaB family. The PsaA/B heterodimer binds the P700 chlorophyll special pair and subsequent electron acceptors. PSI consists of a core antenna complex that captures photons, and an electron transfer chain that converts photonic excitation into a charge separation. The eukaryotic PSI reaction center is composed of at least 11 subunits. P700 is a chlorophyll a/chlorophyll a' dimer, A0 is one or more chlorophyll a, A1 is one or both phylloquinones and FX is a shared 4Fe-4S iron-sulfur center. serves as cofactor.

It localises to the plastid. It is found in the chloroplast thylakoid membrane. It catalyses the reaction reduced [plastocyanin] + hnu + oxidized [2Fe-2S]-[ferredoxin] = oxidized [plastocyanin] + reduced [2Fe-2S]-[ferredoxin]. In terms of biological role, psaA and PsaB bind P700, the primary electron donor of photosystem I (PSI), as well as the electron acceptors A0, A1 and FX. PSI is a plastocyanin-ferredoxin oxidoreductase, converting photonic excitation into a charge separation, which transfers an electron from the donor P700 chlorophyll pair to the spectroscopically characterized acceptors A0, A1, FX, FA and FB in turn. Oxidized P700 is reduced on the lumenal side of the thylakoid membrane by plastocyanin. This is Photosystem I P700 chlorophyll a apoprotein A1 from Asplenium nidus (Bird's nest fern).